The chain runs to 416 residues: Keratin, type I cuticular Ha1 (416 aa).

The tract at residues 1 to 56 is head; the sequence is MPYNFCLPSLSCRTSCSSRPCVPPSCHSCTLPGACNIPANVSNCNWFCEGSFNGSE. Residues 56–367 form the IF rod domain; it reads EKETMQFLND…SLLESEDCNL (312 aa). The tract at residues 57-91 is coil 1A; it reads KETMQFLNDRLASYLEKVRQLERDNAELENLIRER. The linker 1 stretch occupies residues 92–102; it reads SQQQEPLLCPS. The coil 1B stretch occupies residues 103–203; that stretch reads YQSYFKTIEE…HEQEVNTLRC (101 aa). Residues 204–219 form a linker 12 region; sequence QLGDRLNVEVDAAPTV. Positions 220-363 are coil 2; that stretch reads DLNRVLNETR…NTYRSLLESE (144 aa). Residues 364–416 form a tail region; it reads DCNLPSNPCATTNACSKPIGPCLSNPCTSCVPPAPCTPCAPRPRCGPCNSFVR.

Belongs to the intermediate filament family. In terms of tissue distribution, present in scalp but not in hairless skin. Abundantly expressed in the differentiating cortex of growing (anagen) hair. Expression is restricted to the keratinocytes of the hair cortex and is absent from inner root sheath and medulla.

In Homo sapiens (Human), this protein is Keratin, type I cuticular Ha1 (KRT31).